The sequence spans 541 residues: Tegument protein UL21 homolog (541 aa).

This sequence belongs to the alphaherpesvirinae UL21 protein family. In terms of assembly, interacts (via C-terminus) with UL16.

It is found in the virion tegument. Its subcellular location is the host cytoplasm. The protein resides in the host nucleus. In terms of biological role, may participate in DNA packaging/capsid maturation events. Promotes efficient incorporation of tegument proteins UL46, UL49, and US3 homologs into virions. May also play a role in capsid transport to the trans-Golgi network (TGN). This chain is Tegument protein UL21 homolog, found in Homo sapiens (Human).